The following is a 297-amino-acid chain: Ribosomal RNA small subunit methyltransferase A (297 aa).

S-adenosyl-L-methionine contacts are provided by N31, L33, G58, E79, D104, and N129.

It belongs to the class I-like SAM-binding methyltransferase superfamily. rRNA adenine N(6)-methyltransferase family. RsmA subfamily.

It localises to the cytoplasm. The enzyme catalyses adenosine(1518)/adenosine(1519) in 16S rRNA + 4 S-adenosyl-L-methionine = N(6)-dimethyladenosine(1518)/N(6)-dimethyladenosine(1519) in 16S rRNA + 4 S-adenosyl-L-homocysteine + 4 H(+). In terms of biological role, specifically dimethylates two adjacent adenosines (A1518 and A1519) in the loop of a conserved hairpin near the 3'-end of 16S rRNA in the 30S particle. May play a critical role in biogenesis of 30S subunits. The chain is Ribosomal RNA small subunit methyltransferase A from Staphylococcus aureus (strain Mu3 / ATCC 700698).